We begin with the raw amino-acid sequence, 305 residues long: Protoheme IX farnesyltransferase 1 (305 aa).

9 helical membrane passes run 30–50, 59–79, 108–128, 129–149, 154–176, 180–202, 232–252, 253–273, and 284–304; these read IGIVNSNLVTTFTGMWLAFQF, LDVILFTMLGAALIIGGSGAM, FVLTIALSFLIVGEILLFAAS, FAAGMWGLAGIFAYVVLYSMW, HVSNTVVGSISGAIPPIIGFAAV, LGPGALALFLIMFAWQPPHFYAL, LFWILLLLPLPFLLPELGIGF, LTLATALNLGWLILALKGFTA, and FIYSLNHMTILFVSIIIFAVF.

The protein belongs to the UbiA prenyltransferase family. Protoheme IX farnesyltransferase subfamily. Interacts with CtaA.

It localises to the cell membrane. It catalyses the reaction heme b + (2E,6E)-farnesyl diphosphate + H2O = Fe(II)-heme o + diphosphate. It functions in the pathway porphyrin-containing compound metabolism; heme O biosynthesis; heme O from protoheme: step 1/1. Its function is as follows. Converts heme B (protoheme IX) to heme O by substitution of the vinyl group on carbon 2 of heme B porphyrin ring with a hydroxyethyl farnesyl side group. This Lysinibacillus sphaericus (strain C3-41) protein is Protoheme IX farnesyltransferase 1.